A 493-amino-acid chain; its full sequence is MNSTSLYAAIDLGSNSFHMLVVREAAGSIQTLTRIKRKVRLAAGLNNDNHLSAEAMERGWQCLRLFAERLQDIPQPQIRVVATATLRLAVNAGEFIAKAQTILGCPVQVISGEEEARLIYQGAAHTTGGADQRLVVDIGGASTELVTGTGAQTTSLFSLSMGCVTWLERYFSDRNLAQENFDDAEKAARDVLRPVADELRFHGWKVCVGASGTVQALQEIMMAQGMDERITLAKLQQLKQRAIQCGRLEELEIEGLTLERALVFPSGLAILIAIFTELNIQSMTLAGGALREGLVYGMLHLAVDQDIRSRTLRNIQRRFIVDTDQANRVAKLADNFLKQVENAWHIEPISRELLLSACQLHEIGLSVDFKQAPYHAAYLVRHLDLPGYTPAQKKLLATLLLNQTNPVDLSSLHQQNAVPPRVAEQLCRLLRLAILFAGRRRDDLVPEITLQALNENLTLTLPGDWLAHHPLGKELIDQESQWQSYVHWPLDVR.

It belongs to the GppA/Ppx family. GppA subfamily.

The catalysed reaction is guanosine 3'-diphosphate 5'-triphosphate + H2O = guanosine 3',5'-bis(diphosphate) + phosphate + H(+). Its pathway is purine metabolism; ppGpp biosynthesis; ppGpp from GTP: step 2/2. Functionally, catalyzes the conversion of pppGpp to ppGpp. Guanosine pentaphosphate (pppGpp) is a cytoplasmic signaling molecule which together with ppGpp controls the 'stringent response', an adaptive process that allows bacteria to respond to amino acid starvation, resulting in the coordinated regulation of numerous cellular activities. In Salmonella paratyphi A (strain ATCC 9150 / SARB42), this protein is Guanosine-5'-triphosphate,3'-diphosphate pyrophosphatase.